The primary structure comprises 353 residues: Photosystem II D2 protein (353 aa).

T2 carries the N-acetylthreonine modification. At T2 the chain carries Phosphothreonine. A helical transmembrane segment spans residues 41-61; that stretch reads CAYFALGGWFTGTTFVTSWYT. Chlorophyll a is bound at residue H118. The helical transmembrane segment at 125–141 threads the bilayer; sequence GFMLRQFELARPVQLRP. 2 residues coordinate pheophytin a: Q130 and N143. The helical transmembrane segment at 153-166 threads the bilayer; that stretch reads VFLSVFLIYPLGQS. Residue H198 participates in chlorophyll a binding. Residues 208–228 form a helical membrane-spanning segment; that stretch reads AVLLCAIHGATVENTLFEDGD. A plastoquinone-binding residues include H215 and F262. H215 provides a ligand contact to Fe cation. H269 is a binding site for Fe cation. The chain crosses the membrane as a helical span at residues 279 to 295; the sequence is GLWMSAIGVVGLALNLR.

Belongs to the reaction center PufL/M/PsbA/D family. PSII is composed of 1 copy each of membrane proteins PsbA, PsbB, PsbC, PsbD, PsbE, PsbF, PsbH, PsbI, PsbJ, PsbK, PsbL, PsbM, PsbT, PsbX, PsbY, PsbZ, Psb30/Ycf12, at least 3 peripheral proteins of the oxygen-evolving complex and a large number of cofactors. It forms dimeric complexes. Requires The D1/D2 heterodimer binds P680, chlorophylls that are the primary electron donor of PSII, and subsequent electron acceptors. It shares a non-heme iron and each subunit binds pheophytin, quinone, additional chlorophylls, carotenoids and lipids. There is also a Cl(-1) ion associated with D1 and D2, which is required for oxygen evolution. The PSII complex binds additional chlorophylls, carotenoids and specific lipids. as cofactor. In terms of processing, only phosphorylated in mesophyll cells, phosphorylation increases when cells are grown under high rather than low light regimes (70 vs 900 umol photons/m-2/s).

The protein localises to the plastid. Its subcellular location is the chloroplast thylakoid membrane. It catalyses the reaction 2 a plastoquinone + 4 hnu + 2 H2O = 2 a plastoquinol + O2. Functionally, photosystem II (PSII) is a light-driven water:plastoquinone oxidoreductase that uses light energy to abstract electrons from H(2)O, generating O(2) and a proton gradient subsequently used for ATP formation. It consists of a core antenna complex that captures photons, and an electron transfer chain that converts photonic excitation into a charge separation. The D1/D2 (PsbA/PsbD) reaction center heterodimer binds P680, the primary electron donor of PSII as well as several subsequent electron acceptors. D2 is needed for assembly of a stable PSII complex. This chain is Photosystem II D2 protein, found in Zea mays (Maize).